The sequence spans 203 residues: Na(+)-translocating NADH-quinone reductase subunit E (203 aa).

6 helical membrane-spanning segments follow: residues Ala12–Leu32, Met36–Val56, Phe82–Val102, Gly115–Val135, Leu145–Ile165, and Leu181–Ile201.

This sequence belongs to the NqrDE/RnfAE family. In terms of assembly, composed of six subunits; NqrA, NqrB, NqrC, NqrD, NqrE and NqrF.

The protein resides in the cell inner membrane. The enzyme catalyses a ubiquinone + n Na(+)(in) + NADH + H(+) = a ubiquinol + n Na(+)(out) + NAD(+). NQR complex catalyzes the reduction of ubiquinone-1 to ubiquinol by two successive reactions, coupled with the transport of Na(+) ions from the cytoplasm to the periplasm. NqrA to NqrE are probably involved in the second step, the conversion of ubisemiquinone to ubiquinol. This chain is Na(+)-translocating NADH-quinone reductase subunit E, found in Hahella chejuensis (strain KCTC 2396).